A 166-amino-acid chain; its full sequence is 2-amino-4-hydroxy-6-hydroxymethyldihydropteridine pyrophosphokinase (166 aa).

This sequence belongs to the HPPK family.

The catalysed reaction is 6-hydroxymethyl-7,8-dihydropterin + ATP = (7,8-dihydropterin-6-yl)methyl diphosphate + AMP + H(+). Its pathway is cofactor biosynthesis; tetrahydrofolate biosynthesis; 2-amino-4-hydroxy-6-hydroxymethyl-7,8-dihydropteridine diphosphate from 7,8-dihydroneopterin triphosphate: step 4/4. Functionally, catalyzes the transfer of pyrophosphate from adenosine triphosphate (ATP) to 6-hydroxymethyl-7,8-dihydropterin, an enzymatic step in folate biosynthesis pathway. The protein is 2-amino-4-hydroxy-6-hydroxymethyldihydropteridine pyrophosphokinase (folK) of Streptococcus pyogenes serotype M6 (strain ATCC BAA-946 / MGAS10394).